The sequence spans 237 residues: Phosphoribosylaminoimidazole-succinocarboxamide synthase (237 aa).

It belongs to the SAICAR synthetase family.

The enzyme catalyses 5-amino-1-(5-phospho-D-ribosyl)imidazole-4-carboxylate + L-aspartate + ATP = (2S)-2-[5-amino-1-(5-phospho-beta-D-ribosyl)imidazole-4-carboxamido]succinate + ADP + phosphate + 2 H(+). It functions in the pathway purine metabolism; IMP biosynthesis via de novo pathway; 5-amino-1-(5-phospho-D-ribosyl)imidazole-4-carboxamide from 5-amino-1-(5-phospho-D-ribosyl)imidazole-4-carboxylate: step 1/2. The sequence is that of Phosphoribosylaminoimidazole-succinocarboxamide synthase from Escherichia coli O127:H6 (strain E2348/69 / EPEC).